The following is a 61-amino-acid chain: Small ribosomal subunit protein uS14 (61 aa).

The Zn(2+) site is built by C24, C27, C40, and C43.

The protein belongs to the universal ribosomal protein uS14 family. Zinc-binding uS14 subfamily. As to quaternary structure, part of the 30S ribosomal subunit. Contacts proteins S3 and S10. Requires Zn(2+) as cofactor.

Binds 16S rRNA, required for the assembly of 30S particles and may also be responsible for determining the conformation of the 16S rRNA at the A site. This Alkaliphilus oremlandii (strain OhILAs) (Clostridium oremlandii (strain OhILAs)) protein is Small ribosomal subunit protein uS14.